We begin with the raw amino-acid sequence, 197 residues long: Rac-like GTP-binding protein ARAC1 (197 aa).

Residue 13-20 participates in GTP binding; that stretch reads GDGAVGKT. The Effector region signature appears at 35 to 43; the sequence is YVPTVFDNF. Residues 60–64 and 118–121 each bind GTP; these read DTAGQ and TKLD. Residue cysteine 194 is modified to Cysteine methyl ester. The S-geranylgeranyl cysteine moiety is linked to residue cysteine 194. A propeptide spans 195-197 (removed in mature form); the sequence is SIL.

This sequence belongs to the small GTPase superfamily. Rho family. As to quaternary structure, interacts with SPK1. In terms of tissue distribution, ubiquitous.

It localises to the cytoplasm. It is found in the membrane. Functionally, inactive GDP-bound Rho GTPases reside in the cytosol, are found in a complex with Rho GDP-dissociation inhibitors (Rho GDIs), and are released from the GDI protein in order to translocate to membranes upon activation. This Arabidopsis thaliana (Mouse-ear cress) protein is Rac-like GTP-binding protein ARAC1 (ARAC1).